The following is a 910-amino-acid chain: Seizure 6-like protein 2 (910 aa).

Positions 1-27 (MGTPKAQHPPPSQLLLLILLSCAWIEG) are cleaved as a signal peptide. The Extracellular portion of the chain corresponds to 28–844 (LPLKEDEMMP…DPSRQLEGGN (817 aa)). The disordered stretch occupies residues 70-152 (PGSDPDPTLA…PLRPEGGEEE (83 aa)). Positions 123 to 145 (LTPPPGTTAPPPPGPASPVPPLR) are enriched in pro residues. Cys173 and Cys202 are disulfide-bonded. The region spanning 173 to 286 (CNNNISEGEG…NGFRIHYQAY (114 aa)) is the CUB 1 domain. Asn222 is a glycosylation site (N-linked (GlcNAc...) asparagine). Residues 288-347 (LSCGFPPRPAHGDVSVTDLHPGGTATFHCDSGYQLQGEETLICLNGTRPAWTGEPPSCTA) enclose the Sushi 1 domain. 12 cysteine pairs are disulfide-bonded: Cys290/Cys330, Cys316/Cys345, Cys349/Cys376, Cys464/Cys508, Cys491/Cys523, Cys527/Cys553, Cys644/Cys686, Cys672/Cys699, Cys705/Cys747, Cys733/Cys764, Cys771/Cys813, and Cys799/Cys828. 4 N-linked (GlcNAc...) asparagine glycosylation sites follow: Asn332, Asn373, Asn473, and Asn517. A CUB 2 domain is found at 349–459 (CGGTIHNATL…LLLSLRFEAF (111 aa)). Positions 462–525 (DRCFPPFLAH…WNDTEPACKA (64 aa)) constitute a Sushi 2 domain. The region spanning 527–638 (CGGELSEPAG…QGFVLHFKEV (112 aa)) is the CUB 3 domain. Sushi domains are found at residues 642–701 (DTCP…ACQK), 703–766 (MTCA…KCAL), and 769–830 (EPCL…LCKV). Residues 845–865 (LALAILLPLGLVIVLGIGVYI) traverse the membrane as a helical segment. Residues 866 to 910 (YYTKLQGKSLFGFSGSHSYSPITVESDFSNPLYEAGDTREYEVSI) lie on the Cytoplasmic side of the membrane.

It belongs to the SEZ6 family. As to expression, expressed exclusively in the brain, predominantly in the neurons. Wide expression in the gray matter of the brain with high levels in the olfactory bulb, anterior olfactory nuclei, hippocampal formation and cerebellar cortex. Detected diffusely and weakly in the white matter, such as the corpus callosum and cerebellar medulla. In the cerebellar cortex, intensely expressed in Purkinje cells (PC) and granule cells. Detected also in interneurons in the molecular layer. Up-regulated at two weeks after birth.

It localises to the cell membrane. Its subcellular location is the endoplasmic reticulum membrane. In terms of biological role, may contribute to specialized endoplasmic reticulum functions in neurons. The chain is Seizure 6-like protein 2 (Sez6l2) from Mus musculus (Mouse).